Here is a 179-residue protein sequence, read N- to C-terminus: ECF RNA polymerase sigma factor SigF (179 aa).

A sigma-70 factor domain-2 region spans residues 33-93 (RLRAYFMRRM…KLIDHWRRRK (61 aa)). The short motif at 51 to 64 (DLVQETLLAVHLKR) is the Polymerase core binding element. Residues 123–170 (ALASLPQRQRMLVSDVKLTGLSLAEAGARAGISEGAAKVALHRALKAL) form a sigma-70 factor domain-4 region. Positions 145-164 (LAEAGARAGISEGAAKVALH) form a DNA-binding region, H-T-H motif.

Belongs to the sigma-70 factor family. ECF subfamily.

It localises to the cytoplasm. In terms of biological role, sigma factors are initiation factors that promote the attachment of RNA polymerase to specific initiation sites and are then released. Extracytoplasmic function (ECF) sigma factors are held in an inactive form by a cognate anti-sigma factor (NrsF in this case) until they are released. Up-regulates expression of 4 operons (sigF-nrsF, CCNA_02834, CCNA_03001 to CCNA_02999 and CCNA_03363 to CCNA_03366) in response to potassium dichromate (K(2)Cr(2)O(7)) or cadmium chloride (CdCl(2)). Overexpression of sigF leads to higher expression of its regulon. This is ECF RNA polymerase sigma factor SigF from Caulobacter vibrioides (strain NA1000 / CB15N) (Caulobacter crescentus).